Reading from the N-terminus, the 226-residue chain is dTTP/UTP pyrophosphatase (226 aa).

Aspartate 85 serves as the catalytic Proton acceptor.

It belongs to the Maf family. YhdE subfamily. It depends on a divalent metal cation as a cofactor.

Its subcellular location is the cytoplasm. The enzyme catalyses dTTP + H2O = dTMP + diphosphate + H(+). It carries out the reaction UTP + H2O = UMP + diphosphate + H(+). Functionally, nucleoside triphosphate pyrophosphatase that hydrolyzes dTTP and UTP. May have a dual role in cell division arrest and in preventing the incorporation of modified nucleotides into cellular nucleic acids. In Psychrobacter cryohalolentis (strain ATCC BAA-1226 / DSM 17306 / VKM B-2378 / K5), this protein is dTTP/UTP pyrophosphatase.